Consider the following 408-residue polypeptide: Voltage-gated potassium channel subunit beta-1 (408 aa).

4 residues coordinate NADP(+): Thr97, Trp98, Gln104, and Asp126. Tyr131 functions as the Proton donor/acceptor in the catalytic mechanism. Asn199, Ser229, Arg230, Gln255, Trp284, Ser285, Pro286, Leu287, Ala288, Cys289, Lys295, Arg305, Gly364, Ser366, Gln370, Glu373, and Asn374 together coordinate NADP(+).

Belongs to the shaker potassium channel beta subunit family. As to quaternary structure, homotetramer. Interaction with tetrameric potassium channel alpha subunits gives rise to a heterooctamer. Identified in potassium channel complexes containing KCNA1, KCNA2, KCNA4, KCNA5, KCNA6, KCNAB1 and KCNAB2. Part of a complex containing KCNA1, KCNA4 and LGI1; interaction with LGI1 inhibits down-regulation of KCNA1 channel activity. Interacts with the dimer formed by GNB1 and GNG2; this enhances KCNA1 binding. Interacts with SQSTM1. As to expression, expression most abundant in aorta. Also high in left ventricle. Also detected in right ventricle, atrium, brain, skeletal muscle and kidney. Not detected in liver.

Its subcellular location is the cytoplasm. It localises to the membrane. It is found in the cell membrane. The catalysed reaction is a primary alcohol + NADP(+) = an aldehyde + NADPH + H(+). The enzyme catalyses a secondary alcohol + NADP(+) = a ketone + NADPH + H(+). Regulatory subunit of the voltage-gated potassium (Kv) Shaker channels composed of pore-forming and potassium-conducting alpha subunits and of regulatory beta subunits. The beta-1/KCNAB1 cytoplasmic subunit mediates closure of delayed rectifier potassium channels by physically obstructing the pore via its N-terminal domain and increases the speed of channel closure for other family members. Promotes the inactivation of Kv1.1/KCNA1, Kv1.2/KCNA2, Kv1.4/KCNA4, Kv1.5/KCNA5 and Kv1.6/KCNA6 alpha subunit-containing channels. Displays nicotinamide adenine dinucleotide phosphate (NADPH)-dependent aldoketoreductase activity by catalyzing the NADPH-dependent reduction of a variety of endogenous aldehydes and ketones. The binding of NADPH is required for efficient down-regulation of potassium channel activity. Oxidation of the bound NADPH restrains N-terminal domain from blocking the channel, thereby decreasing N-type inactivation of potassium channel activity. This Mustela putorius (European polecat) protein is Voltage-gated potassium channel subunit beta-1 (KCNAB1).